Consider the following 101-residue polypeptide: MGKHILLLPLGLSLLMSSLLALQCFRCTSFDSTGFCHVGRQKCQTYPDEICAWVVVTTRDGKFVYGNQSCAECNATTVEHGSLIVSTNCCSATPFCNMVHR.

The N-terminal stretch at 1–21 is a signal peptide; sequence MGKHILLLPLGLSLLMSSLLA. The UPAR/Ly6 domain maps to 22 to 99; it reads LQCFRCTSFD…CSATPFCNMV (78 aa). 5 disulfide bridges follow: Cys-24/Cys-51, Cys-27/Cys-36, Cys-43/Cys-70, Cys-73/Cys-89, and Cys-90/Cys-96. N-linked (GlcNAc...) asparagine glycans are attached at residues Asn-67 and Asn-74.

Post-translationally, N-glycosylated.

Its subcellular location is the secreted. The polypeptide is Urinary protein 2 (Rattus norvegicus (Rat)).